Consider the following 88-residue polypeptide: MEKRDFHVVADTGIHARPATLLVQTASKFNSDVNLEYKGKSVNLKSIMGVMSLGVGQGADVTISAEGADEADAINAIEETMKKEGLSE.

An HPr domain is found at 1 to 88; that stretch reads MEKRDFHVVA…ETMKKEGLSE (88 aa). Catalysis depends on His-15, which acts as the Pros-phosphohistidine intermediate. Position 46 is a phosphoserine; by HPrK/P (Ser-46).

The protein belongs to the HPr family.

The protein resides in the cytoplasm. Its activity is regulated as follows. Phosphorylation on Ser-46 inhibits the phosphoryl transfer from enzyme I to HPr. Its function is as follows. General (non sugar-specific) component of the phosphoenolpyruvate-dependent sugar phosphotransferase system (sugar PTS). This major carbohydrate active-transport system catalyzes the phosphorylation of incoming sugar substrates concomitantly with their translocation across the cell membrane. The phosphoryl group from phosphoenolpyruvate (PEP) is transferred to the phosphoryl carrier protein HPr by enzyme I. Phospho-HPr then transfers it to the PTS EIIA domain. Functionally, P-Ser-HPr interacts with the catabolite control protein A (CcpA), forming a complex that binds to DNA at the catabolite response elements cre, operator sites preceding a large number of catabolite-regulated genes. Thus, P-Ser-HPr is a corepressor in carbon catabolite repression (CCR), a mechanism that allows bacteria to coordinate and optimize the utilization of available carbon sources. P-Ser-HPr also plays a role in inducer exclusion, in which it probably interacts with several non-PTS permeases and inhibits their transport activity. The sequence is that of Phosphocarrier protein HPr (ptsH) from Latilactobacillus sakei (Lactobacillus sakei).